The following is a 321-amino-acid chain: Anthranilate phosphoribosyltransferase (321 aa).

5-phospho-alpha-D-ribose 1-diphosphate contacts are provided by residues glycine 72, 75-76, threonine 80, 82-85, 99-107, and serine 111; these read GD, NVST, and KHGNVSITS. Residue glycine 72 participates in anthranilate binding. Serine 84 contributes to the Mg(2+) binding site. Anthranilate is bound at residue asparagine 102. Arginine 157 is an anthranilate binding site. Residues aspartate 216 and glutamate 217 each contribute to the Mg(2+) site.

The protein belongs to the anthranilate phosphoribosyltransferase family. As to quaternary structure, homodimer. Requires Mg(2+) as cofactor.

The enzyme catalyses N-(5-phospho-beta-D-ribosyl)anthranilate + diphosphate = 5-phospho-alpha-D-ribose 1-diphosphate + anthranilate. It functions in the pathway amino-acid biosynthesis; L-tryptophan biosynthesis; L-tryptophan from chorismate: step 2/5. Its function is as follows. Catalyzes the transfer of the phosphoribosyl group of 5-phosphorylribose-1-pyrophosphate (PRPP) to anthranilate to yield N-(5'-phosphoribosyl)-anthranilate (PRA). The sequence is that of Anthranilate phosphoribosyltransferase from Methanococcus maripaludis (strain DSM 14266 / JCM 13030 / NBRC 101832 / S2 / LL).